A 249-amino-acid chain; its full sequence is Inhibitor of growth protein 4 (249 aa).

The stretch at 25 to 118 (FQLMRDLDQR…ADLKEKQIES (94 aa)) forms a coiled coil. The interval 115–160 (QIESSDYDSSSSKGKKKGRAQKEKKAARARSKGKNSDEEAPKTAQK) is disordered. The PHD-type zinc-finger motif lies at 196–245 (PTYCLCHQVSYGEMIGCDNPDCSIEWFHFACVGLTTKPRGKWFCPRCSQE). Zn(2+) contacts are provided by cysteine 199, cysteine 201, cysteine 212, cysteine 217, histidine 223, cysteine 226, cysteine 239, and cysteine 242.

The protein belongs to the ING family. In terms of assembly, homodimer. Component of the HBO1 complex.

It localises to the nucleus. Component of HBO1 complexes, which specifically mediate acetylation of histone H3 at 'Lys-14' (H3K14ac), and have reduced activity toward histone H4. Through chromatin acetylation it may function in DNA replication. The protein is Inhibitor of growth protein 4 (ING4) of Gallus gallus (Chicken).